Consider the following 31-residue polypeptide: Cytochrome b6-f complex subunit 6 (31 aa).

Residues 4 to 24 form a helical membrane-spanning segment; it reads ITSYFGFLLVALTITSALFIG.

It belongs to the PetL family. As to quaternary structure, the 4 large subunits of the cytochrome b6-f complex are cytochrome b6, subunit IV (17 kDa polypeptide, PetD), cytochrome f and the Rieske protein, while the 4 small subunits are PetG, PetL, PetM and PetN. The complex functions as a dimer.

Its subcellular location is the plastid. It localises to the chloroplast thylakoid membrane. Component of the cytochrome b6-f complex, which mediates electron transfer between photosystem II (PSII) and photosystem I (PSI), cyclic electron flow around PSI, and state transitions. PetL is important for photoautotrophic growth as well as for electron transfer efficiency and stability of the cytochrome b6-f complex. In Pelargonium hortorum (Common geranium), this protein is Cytochrome b6-f complex subunit 6.